A 156-amino-acid polypeptide reads, in one-letter code: Small ribosomal subunit protein uS7 (156 aa).

The protein belongs to the universal ribosomal protein uS7 family. In terms of assembly, part of the 30S ribosomal subunit. Contacts proteins S9 and S11.

One of the primary rRNA binding proteins, it binds directly to 16S rRNA where it nucleates assembly of the head domain of the 30S subunit. Is located at the subunit interface close to the decoding center, probably blocks exit of the E-site tRNA. This chain is Small ribosomal subunit protein uS7, found in Clostridium novyi (strain NT).